Consider the following 1118-residue polypeptide: MKKNILKILMDSYSKESKIQTVRRVTSVSLLAVYLTMNTSSLVLAKPIENTNDTSIKNVEKLRNAPNEENSKKVEDSKNDKVEHVKNIEEAKVEQVAPEVKSKSTLRSASIANTNSEKYDFEYLNGLSYTELTNLIKNIKWNQINGLFNYSTGSQKFFGDKNRVQAIINALQESGRTYTANDMKGIETFTEVLRAGFYLGYYNDGLSYLNDRNFQDKCIPAMIAIQKNPNFKLGTAVQDEVITSLGKLIGNASANAEVVNNCVPVLKQFRENLNQYAPDYVKGTAVNELIKGIEFDFSGAAYEKDVKTMPWYGKIDPFINELKALGLYGNITSATEWASDVGIYYLSKFGLYSTNRNDIVQSLEKAVDMYKYGKIAFVAMERITWDYDGIGSNGKKVDHDKFLDDAEKHYLPKTYTFDNGTFIIRAGDKVSEEKIKRLYWASREVKSQFHRVVGNDKALEVGNADDVLTMKIFNSPEEYKFNTNINGVSTDNGGLYIEPRGTFYTYERTPQQSIFSLEELFRHEYTHYLQARYLVDGLWGQGPFYEKNRLTWFDEGTAEFFAGSTRTSGVLPRKSILGYLAKDKVDHRYSLKKTLNSGYDDSDWMFYNYGFAVAHYLYEKDMPTFIKMNKAILNTDVKSYDEIIKKLSDDANKNTEYQNHIQELADKYQGAGIPLVSDDYLKDHGYKKASEVYSEISKAASLTNTSVTAEKSQYFNTFTLRGTYTGETSKGEFKDWDEMSKKLDGTLESLAKNSWSGYKTLTAYFTNYRVTSDNKVQYDVVFHGVLTDNADISNNKAPIAKVTGPSTGAVGRNIEFSGKDSKDEDGKIVSYDWDFGDGATSRGKNSVHAYKKAGTYNVTLKVTDDKGATATESFTIEIKNEDTTTPITKEMEPNDDIKEANGPIVEGVTVKGDLNGSDDADTFYFDVKEDGDVTIELPYSGSSNFTWLVYKEGDDQNHIASGIDKNNSKVGTFKSTKGRHYVFIYKHDSASNISYSLNIKGLGNEKLKEKENNDSSDKATVIPNFNTTMQGSLLGDDSRDYYSFEVKEEGEVNIELDKKDEFGVTWTLHPESNINDRITYGQVDGNKVSNKVKLRPGKYYLLVYKYSGSGNYELRVNK.

Residues 1–45 (MKKNILKILMDSYSKESKIQTVRRVTSVSLLAVYLTMNTSSLVLA) form the signal peptide. Positions 46 to 110 (KPIENTNDTS…KSKSTLRSAS (65 aa)) are excised as a propeptide. Residues 111–786 (IANTNSEKYD…QYDVVFHGVL (676 aa)) form an S1 metalloprotease domain, degrades both FALGPA (furylacryloyl-Leu-Gly-Pro-Ala) and type I collagen region. The activator domain required for full activity on collagen stretch occupies residues 119–388 (YDFEYLNGLS…AMERITWDYD (270 aa)). Residues 389–670 (GIGSNGKKVD…IQELADKYQG (282 aa)) form a catalytic subdomain region. A degrades soluble FALGPA peptide (furylacryloyl-Leu-Gly-Pro-Ala) but not type I collagen region spans residues 396 to 1118 (KVDHDKFLDD…SGNYELRVNK (723 aa)). Glu-498 serves as a coordination point for Ca(2+). A Zn(2+)-binding site is contributed by His-523. Glu-524 is a catalytic residue. His-527 lines the Zn(2+) pocket. The Ca(2+) site is built by Ala-531, Val-535, and Gly-537. Residue Glu-555 coordinates Zn(2+). The helper subdomain stretch occupies residues 679–790 (DYLKDHGYKK…VFHGVLTDNA (112 aa)). An S2 domain region spans residues 787–882 (TDNADISNNK…SFTIEIKNED (96 aa)). Ca(2+) is bound by residues Asn-795, Lys-796, Asp-823, Asp-825, Asp-864, Glu-890, Glu-892, Asn-894, Asp-913, Asp-918, Ala-920, Asp-921, Glu-1009, Glu-1011, Asn-1013, Asp-1014, Ser-1032, Asp-1037, Arg-1039, and Asp-1040. In terms of domain architecture, PKD spans 797–885 (APIAKVTGPS…IEIKNEDTTT (89 aa)). Residues 886-1003 (PITKEMEPND…SYSLNIKGLG (118 aa)) are S3a collagen-binding domain. An S3b collagen-binding domain region spans residues 1008–1118 (KEKENNDSSD…SGNYELRVNK (111 aa)). Positions 1102-1106 (LVYKY) are collagen-binding.

The protein belongs to the peptidase M9B family. Collagenase subfamily. It depends on Ca(2+) as a cofactor. Zn(2+) is required as a cofactor. Upon purification gives 67 kDa, 78 kDa, 82 kDa and 116 kDa (full-length) proteins all of which have the same N-terminus; only the longest form digests insoluble collagen. At least 2 in vivo isolated forms (C1b and C1c) are missing the second collagen-binding domain, ending on Lys-1006 and Lys-1018 respectively.

Its subcellular location is the secreted. The catalysed reaction is Digestion of native collagen in the triple helical region at Xaa-|-Gly bonds. With synthetic peptides, a preference is shown for Gly at P3 and P1', Pro and Ala at P2 and P2', and hydroxyproline, Ala or Arg at P3'.. Inhibited by 1-10-phenanthroline. Inhibited by peptidomimetic isoamyl-phosphonyl-Gly-Pro-Ala, which binds to Zn(2+). Inhibited by broad-spectrum zinc metalloprotease inhibitor batimastat. N-aryl mercaptoacetamide-based inhibitors have been isolated that act on clostridial collagenases with submicromolar affinity while having negligibile activity on human collagenases. Functionally, clostridial collagenases are among the most efficient degraders of eukaryotic collagen known; saprophytes use collagen as a carbon source while pathogens additionally digest collagen to aid in host colonization. Has both tripeptidylcarboxypeptidase on Gly-X-Y and endopeptidase activities; the endopeptidase cuts within the triple helix region of collagen while tripeptidylcarboxypeptidase successively digests the exposed ends, thus clostridial collagenases can digest large sections of collagen. Active on soluble type I collagen, insoluble collagen, azocoll, soluble PZ-peptide (all collagenase substrates) and gelatin. The full-length protein has collagenase activity, while the in vivo derived C-terminally truncated shorter versions only act on gelatin. In vitro digestion of soluble calf skin collagen fibrils requires both ColG and ColH; ColG forms missing the second collagen-binding domain are also synergistic with ColH, although their overall efficiency is decreased. The activator domain (residues 119-388) and catalytic subdomain (389-670) open and close around substrate using a Gly-rich hinge (387-397), allowing digestion when the protein is closed. Binding of collagen requires Ca(2+) and is inhibited by EGTA; the collagen-binding domain (CBD, S3a plus S3b) specifically recognizes the triple-helical conformation made by 3 collagen protein chains in the triple-helical region. Isolated CBD (S3a plus S3b) binds collagen fibrils and sheets of many tissues. In Hathewaya histolytica (Clostridium histolyticum), this protein is Collagenase ColG.